Here is a 418-residue protein sequence, read N- to C-terminus: UDP-N-acetylglucosamine 1-carboxyvinyltransferase (418 aa).

Lys-22 to Asn-23 lines the phosphoenolpyruvate pocket. Arg-92 is a binding site for UDP-N-acetyl-alpha-D-glucosamine. Catalysis depends on Cys-116, which acts as the Proton donor. At Cys-116 the chain carries 2-(S-cysteinyl)pyruvic acid O-phosphothioketal. Residues Asp-306 and Ile-328 each contribute to the UDP-N-acetyl-alpha-D-glucosamine site.

It belongs to the EPSP synthase family. MurA subfamily.

It localises to the cytoplasm. The catalysed reaction is phosphoenolpyruvate + UDP-N-acetyl-alpha-D-glucosamine = UDP-N-acetyl-3-O-(1-carboxyvinyl)-alpha-D-glucosamine + phosphate. The protein operates within cell wall biogenesis; peptidoglycan biosynthesis. Functionally, cell wall formation. Adds enolpyruvyl to UDP-N-acetylglucosamine. This Shewanella amazonensis (strain ATCC BAA-1098 / SB2B) protein is UDP-N-acetylglucosamine 1-carboxyvinyltransferase.